The chain runs to 456 residues: Shootin-1 (456 aa).

Methionine 1 is modified (N-acetylmethionine). Phosphoserine is present on residues serine 3 and serine 4. A coiled-coil region spans residues 7-353 (EKQLQLITSL…RVNQSENSVP (347 aa)). A phosphoserine; by PAK1 mark is found at serine 101 and serine 249. Disordered stretches follow at residues 343 to 405 (KRVN…VTDL) and 418 to 445 (KKGV…CESA). Over residues 352–369 (VPPPPPPPPPLPPPPPNP) the composition is skewed to pro residues. Serine 375 carries the post-translational modification Phosphoserine.

This sequence belongs to the shootin family. As to quaternary structure, interacts with L1CAM; this interaction occurs in axonal growth cones. Interacts with actin filament retrograde flow; this interaction is enhanced in a netrin-1- and PAK1-dependent manner and promotes F-actin-substrate coupling and concomitant formation of traction forces at axonal growth cones. Interacts with RUFY3. Interacts with PFN2. Interacts (via N-terminus) with KIF20B; this interaction is direct and promotes the association of SHTN1 to microtubules in primary neurons. Associates with microtubule. Phosphorylated on Ser-101 and Ser-249 by PAK1 through a CDC42- and RAC1-dependent signaling pathway, which enhances its association with F-actin retrograde flow in filopodia and lamellipodia of axonal growth cones. Phosphorylation on Ser-101 and Ser-249 is increased by netrin-1.

It localises to the perikaryon. Its subcellular location is the cell projection. It is found in the axon. The protein resides in the growth cone. The protein localises to the cytoplasm. It localises to the cytoskeleton. Its subcellular location is the filopodium. It is found in the lamellipodium. In terms of biological role, involved in the generation of internal asymmetric signals required for neuronal polarization and neurite outgrowth. Mediates netrin-1-induced F-actin-substrate coupling or 'clutch engagement' within the axon growth cone through activation of CDC42, RAC1 and PAK1-dependent signaling pathway, thereby converting the F-actin retrograde flow into traction forces, concomitantly with filopodium extension and axon outgrowth. Plays a role in cytoskeletal organization by regulating the subcellular localization of phosphoinositide 3-kinase (PI3K) activity at the axonal growth cone. Also plays a role in regenerative neurite outgrowth. In the developing cortex, cooperates with KIF20B to promote both the transition from the multipolar to the bipolar stage and the radial migration of cortical neurons from the ventricular zone toward the superficial layer of the neocortex. Involved in the accumulation of phosphatidylinositol 3,4,5-trisphosphate (PIP3) in the growth cone of primary hippocampal neurons. The protein is Shootin-1 of Pongo abelii (Sumatran orangutan).